The sequence spans 81 residues: MKSDIHPTYEETTVVCGCGNTFQTRSTKQGGRIVAEVCSQCHPFYTGKQKILDSGGRVARFERRYGKRKAGADKDQAAADK.

Cys16, Cys18, Cys38, and Cys41 together coordinate Zn(2+).

It belongs to the bacterial ribosomal protein bL31 family. Type A subfamily. In terms of assembly, part of the 50S ribosomal subunit. Zn(2+) is required as a cofactor.

Binds the 23S rRNA. This chain is Large ribosomal subunit protein bL31, found in Mycobacterium marinum (strain ATCC BAA-535 / M).